The sequence spans 204 residues: High frequency lysogenization protein HflD homolog (204 aa).

The protein belongs to the HflD family.

It localises to the cytoplasm. It is found in the cell inner membrane. In Stenotrophomonas maltophilia (strain K279a), this protein is High frequency lysogenization protein HflD homolog.